A 99-amino-acid chain; its full sequence is Large ribosomal subunit protein uL23 (99 aa).

Belongs to the universal ribosomal protein uL23 family. Part of the 50S ribosomal subunit. Contacts protein L29, and trigger factor when it is bound to the ribosome.

Functionally, one of the early assembly proteins it binds 23S rRNA. One of the proteins that surrounds the polypeptide exit tunnel on the outside of the ribosome. Forms the main docking site for trigger factor binding to the ribosome. This Saccharopolyspora erythraea (strain ATCC 11635 / DSM 40517 / JCM 4748 / NBRC 13426 / NCIMB 8594 / NRRL 2338) protein is Large ribosomal subunit protein uL23.